We begin with the raw amino-acid sequence, 224 residues long: Putative adhesin A1C_06425 (224 aa).

A signal peptide spans 1 to 22 (MKKLLLIATTSATILSSSISFA).

The chain is Putative adhesin A1C_06425 from Rickettsia akari (strain Hartford).